Reading from the N-terminus, the 149-residue chain is Large ribosomal subunit protein uL11 (149 aa).

Belongs to the universal ribosomal protein uL11 family. In terms of assembly, part of the ribosomal stalk of the 50S ribosomal subunit. Interacts with L10 and the large rRNA to form the base of the stalk. L10 forms an elongated spine to which L12 dimers bind in a sequential fashion forming a multimeric L10(L12)X complex. Post-translationally, one or more lysine residues are methylated.

In terms of biological role, forms part of the ribosomal stalk which helps the ribosome interact with GTP-bound translation factors. In Methylobacterium nodulans (strain LMG 21967 / CNCM I-2342 / ORS 2060), this protein is Large ribosomal subunit protein uL11.